The primary structure comprises 309 residues: Dihydroorotate dehydrogenase B (NAD(+)), catalytic subunit (309 aa).

FMN-binding positions include Ser21 and 45–46 (KA). Residues Lys45 and 69-73 (NAIGL) contribute to the substrate site. Positions 99 and 127 each coordinate FMN. Asn127 is a substrate binding site. The active-site Nucleophile is the Cys130. Positions 165 and 191 each coordinate FMN. 192-193 (NT) provides a ligand contact to substrate. FMN contacts are provided by residues Gly217, 243-244 (GG), and 265-266 (GT).

The protein belongs to the dihydroorotate dehydrogenase family. Type 1 subfamily. As to quaternary structure, heterotetramer of 2 PyrK and 2 PyrD type B subunits. FMN serves as cofactor.

The protein localises to the cytoplasm. The catalysed reaction is (S)-dihydroorotate + NAD(+) = orotate + NADH + H(+). Its pathway is pyrimidine metabolism; UMP biosynthesis via de novo pathway; orotate from (S)-dihydroorotate (NAD(+) route): step 1/1. Functionally, catalyzes the conversion of dihydroorotate to orotate with NAD(+) as electron acceptor. The sequence is that of Dihydroorotate dehydrogenase B (NAD(+)), catalytic subunit (pyrD) from Bacillus mycoides (strain KBAB4) (Bacillus weihenstephanensis).